Reading from the N-terminus, the 303-residue chain is GTPase Era (303 aa).

Positions 8-176 (YCGFIAIVGR…ASIVRKHMPE (169 aa)) constitute an Era-type G domain. A G1 region spans residues 16-23 (GRPNVGKS). 16 to 23 (GRPNVGKS) is a GTP binding site. Residues 42–46 (QTTRH) form a G2 region. Positions 63 to 66 (DTPG) are G3. Residues 63 to 67 (DTPGL) and 125 to 128 (NKVD) contribute to the GTP site. Residues 125 to 128 (NKVD) are G4. Residues 155-157 (ISA) are G5. The KH type-2 domain maps to 207-284 (LGEELPYSVT…HLELWVKVKS (78 aa)).

It belongs to the TRAFAC class TrmE-Era-EngA-EngB-Septin-like GTPase superfamily. Era GTPase family. Monomer.

The protein localises to the cytoplasm. It localises to the cell inner membrane. In terms of biological role, an essential GTPase that binds both GDP and GTP, with rapid nucleotide exchange. Plays a role in 16S rRNA processing and 30S ribosomal subunit biogenesis and possibly also in cell cycle regulation and energy metabolism. The sequence is that of GTPase Era from Yersinia pseudotuberculosis serotype O:1b (strain IP 31758).